The chain runs to 346 residues: 3-keto-steroid reductase ERG27 (346 aa).

The NADP(+) site is built by L19, T42, and K48. Active-site proton donor residues include S182 and Y205. NADP(+) contacts are provided by Y205, K209, and S241. The active-site Lowers pKa of active site Tyr is the K209. Residues 242-262 (FSFFQYLNVFTYYGMLFLFYL) form a helical membrane-spanning segment. An N-linked (GlcNAc...) asparagine glycan is attached at N272.

This sequence belongs to the short-chain dehydrogenases/reductases (SDR) family. ERG27 subfamily. As to quaternary structure, heterotetramer of ERG25, ERG26, ERG27 and ERG28. ERG28 acts as a scaffold to tether ERG27 and other 4,4-demethylation-related enzymes, forming a demethylation enzyme complex, in the endoplasmic reticulum. Interacts with ERG25 and ERG28. Also interacts with ERG7, but only in lipid particles.

It localises to the endoplasmic reticulum membrane. It is found in the lipid droplet. It catalyses the reaction 3-dehydro-4alpha-methylzymosterol + NADPH + H(+) = 4alpha-methylzymosterol + NADP(+). Its pathway is steroid biosynthesis; zymosterol biosynthesis; zymosterol from lanosterol: step 5/6. 3-keto-steroid reductase; part of the third module of ergosterol biosynthesis pathway that includes the late steps of the pathway. ERG27 is a catalytic component of the C-4 demethylation complex that catalyzes the reduction of the keto group on the C-3. The third module or late pathway involves the ergosterol synthesis itself through consecutive reactions that mainly occur in the endoplasmic reticulum (ER) membrane. Firstly, the squalene synthase ERG9 catalyzes the condensation of 2 farnesyl pyrophosphate moieties to form squalene, which is the precursor of all steroids. Squalene synthase is crucial for balancing the incorporation of farnesyl diphosphate (FPP) into sterol and nonsterol isoprene synthesis. Secondly, the squalene epoxidase ERG1 catalyzes the stereospecific oxidation of squalene to (S)-2,3-epoxysqualene, which is considered to be a rate-limiting enzyme in steroid biosynthesis. Then, the lanosterol synthase ERG7 catalyzes the cyclization of (S)-2,3 oxidosqualene to lanosterol, a reaction that forms the sterol core. In the next steps, lanosterol is transformed to zymosterol through a complex process involving various demethylation, reduction and desaturation reactions. The lanosterol 14-alpha-demethylase ERG11 (also known as CYP51) catalyzes C14-demethylation of lanosterol to produce 4,4'-dimethyl cholesta-8,14,24-triene-3-beta-ol, which is critical for ergosterol biosynthesis. The C-14 reductase ERG24 reduces the C14=C15 double bond of 4,4-dimethyl-cholesta-8,14,24-trienol to produce 4,4-dimethyl-cholesta-8,24-dienol. 4,4-dimethyl-cholesta-8,24-dienol is substrate of the C-4 demethylation complex ERG25-ERG26-ERG27 in which ERG25 catalyzes the three-step monooxygenation required for the demethylation of 4,4-dimethyl and 4alpha-methylsterols, ERG26 catalyzes the oxidative decarboxylation that results in a reduction of the 3-beta-hydroxy group at the C-3 carbon to an oxo group, and ERG27 is responsible for the reduction of the keto group on the C-3. ERG28 has a role as a scaffold to help anchor ERG25, ERG26 and ERG27 to the endoplasmic reticulum and ERG29 regulates the activity of the iron-containing C4-methylsterol oxidase ERG25. Then, the sterol 24-C-methyltransferase ERG6 catalyzes the methyl transfer from S-adenosyl-methionine to the C-24 of zymosterol to form fecosterol. The C-8 sterol isomerase ERG2 catalyzes the reaction which results in unsaturation at C-7 in the B ring of sterols and thus converts fecosterol to episterol. The sterol-C5-desaturase ERG3 then catalyzes the introduction of a C-5 double bond in the B ring to produce 5-dehydroepisterol. The C-22 sterol desaturase ERG5 further converts 5-dehydroepisterol into ergosta-5,7,22,24(28)-tetraen-3beta-ol by forming the C-22(23) double bond in the sterol side chain. Finally, ergosta-5,7,22,24(28)-tetraen-3beta-ol is substrate of the C-24(28) sterol reductase ERG4 to produce ergosterol. In terms of biological role, facilitates the association of ERG7 with lipid particles preventing its digestion in the endoplasmic reticulum and the lipid particles. This is 3-keto-steroid reductase ERG27 from Candida albicans (strain SC5314 / ATCC MYA-2876) (Yeast).